The primary structure comprises 628 residues: 1-deoxy-D-xylulose-5-phosphate synthase (628 aa).

Thiamine diphosphate is bound by residues His-72 and 113 to 115; that span reads GHA. Position 144 (Asp-144) interacts with Mg(2+). Thiamine diphosphate-binding positions include 145 to 146, Asn-174, Tyr-287, and Glu-370; that span reads GA. Asn-174 is a Mg(2+) binding site.

It belongs to the transketolase family. DXPS subfamily. Homodimer. Mg(2+) is required as a cofactor. Requires thiamine diphosphate as cofactor.

It carries out the reaction D-glyceraldehyde 3-phosphate + pyruvate + H(+) = 1-deoxy-D-xylulose 5-phosphate + CO2. It functions in the pathway metabolic intermediate biosynthesis; 1-deoxy-D-xylulose 5-phosphate biosynthesis; 1-deoxy-D-xylulose 5-phosphate from D-glyceraldehyde 3-phosphate and pyruvate: step 1/1. In terms of biological role, catalyzes the acyloin condensation reaction between C atoms 2 and 3 of pyruvate and glyceraldehyde 3-phosphate to yield 1-deoxy-D-xylulose-5-phosphate (DXP). The protein is 1-deoxy-D-xylulose-5-phosphate synthase of Prochlorococcus marinus (strain NATL2A).